The primary structure comprises 173 residues: Crossover junction endodeoxyribonuclease RuvC (173 aa).

Catalysis depends on residues aspartate 8, glutamate 67, and aspartate 139. Residues aspartate 8, glutamate 67, and aspartate 139 each contribute to the Mg(2+) site.

The protein belongs to the RuvC family. Homodimer which binds Holliday junction (HJ) DNA. The HJ becomes 2-fold symmetrical on binding to RuvC with unstacked arms; it has a different conformation from HJ DNA in complex with RuvA. In the full resolvosome a probable DNA-RuvA(4)-RuvB(12)-RuvC(2) complex forms which resolves the HJ. Mg(2+) is required as a cofactor.

It localises to the cytoplasm. It catalyses the reaction Endonucleolytic cleavage at a junction such as a reciprocal single-stranded crossover between two homologous DNA duplexes (Holliday junction).. Its function is as follows. The RuvA-RuvB-RuvC complex processes Holliday junction (HJ) DNA during genetic recombination and DNA repair. Endonuclease that resolves HJ intermediates. Cleaves cruciform DNA by making single-stranded nicks across the HJ at symmetrical positions within the homologous arms, yielding a 5'-phosphate and a 3'-hydroxyl group; requires a central core of homology in the junction. The consensus cleavage sequence is 5'-(A/T)TT(C/G)-3'. Cleavage occurs on the 3'-side of the TT dinucleotide at the point of strand exchange. HJ branch migration catalyzed by RuvA-RuvB allows RuvC to scan DNA until it finds its consensus sequence, where it cleaves and resolves the cruciform DNA. The polypeptide is Crossover junction endodeoxyribonuclease RuvC (Shewanella loihica (strain ATCC BAA-1088 / PV-4)).